Here is a 438-residue protein sequence, read N- to C-terminus: MYSTNRTSQSLSRKPGRKHQLRSHRYVMPPSLHLSDSAAASVFRAVRLRGPVGRDVIAGSTSLSIATVNRQVIALLEAGLLRERADLAVSGAIGRPRVPVEVNHEPFVTLGIHIGARTTSIVATDLFGRTLDTVETPTPRNAAGAALTSLADSADRYLQRWRRRRALWVGVTLGGAVDSATGHVDHPRLGWRQAPVGPVLADALGLPVSVASHVDAMAGAELMLGMRRFAPSSSTSLYVYARETVGYALMIGGRVHCPASGPGTIAPLPVHSEMLGGTGQLESTVSDEAVLAAARRLRIIPGIASRTRTGGSATAITDLLRVARAGNQQAKELLAERARVLGGAVALLRDLLNPDEVVVGGQAFTEYPEAMEQVEAAFTAGSVLAPRDIRVTVFGNRVQEAGAGIVSLSGLYADPLGALRRSGALDARLQDTAPEALA.

Polar residues predominate over residues 1–12 (MYSTNRTSQSLS). A disordered region spans residues 1–22 (MYSTNRTSQSLSRKPGRKHQLR). Residues 52–73 (VGRDVIAGSTSLSIATVNRQVI) constitute a DNA-binding region (H-T-H motif).

This sequence belongs to the ROK (NagC/XylR) family.

In terms of biological role, positively regulates the expression of PE13 and PPE18. This Mycobacterium bovis (strain ATCC BAA-935 / AF2122/97) protein is Transcriptional regulator Mb0495.